Here is a 361-residue protein sequence, read N- to C-terminus: Myricetin 3-O-methyltransferase 3 (361 aa).

Residue Asp229 participates in S-adenosyl-L-methionine binding. His267 functions as the Proton acceptor in the catalytic mechanism.

It belongs to the class I-like SAM-binding methyltransferase superfamily. Cation-independent O-methyltransferase family. Homodimer. In terms of tissue distribution, mainly expressed in leaves secreting glandular trichomes types 1 and 4 and, to a lesser extent, in storage trichomes type 6.

The enzyme catalyses kaempferol + S-adenosyl-L-methionine = 3-O-methylkaempferol + S-adenosyl-L-homocysteine + H(+). It catalyses the reaction quercetin + S-adenosyl-L-methionine = 3',4',5,7-tetrahydroxy-3-methoxyflavone + S-adenosyl-L-homocysteine + H(+). The catalysed reaction is myricetin + S-adenosyl-L-methionine = 3-O-methylmyricetin + S-adenosyl-L-homocysteine + H(+). It carries out the reaction kaempferide + S-adenosyl-L-methionine = 3,4'-O-dimethylkaempferol + S-adenosyl-L-homocysteine + H(+). The enzyme catalyses isorhamnetin + S-adenosyl-L-methionine = 3,3'-O-dimethylquercetin + S-adenosyl-L-homocysteine + H(+). It catalyses the reaction rhamnetin + S-adenosyl-L-methionine = 3',4',5-trihydroxy-3,7-dimethoxyflavone + S-adenosyl-L-homocysteine + H(+). The catalysed reaction is laricitrin + S-adenosyl-L-methionine = 3,3'-O-dimethylmyricetin + S-adenosyl-L-homocysteine + H(+). It carries out the reaction syringetin + S-adenosyl-L-methionine = 3,3',5'-O-trimethylmyricetin + S-adenosyl-L-homocysteine + H(+). It participates in flavonoid metabolism. Flavonoid 3-O-methyltransferase involved in the biosynthesis of polymethoxylated flavonoids natural products such as myricetin derivatives, aroma compounds possessing antioxidant properties and exhibiting pharmacological activities such as anti-carcinogen, anti-viral, anti-thrombotic, anti-diabetic, anti-atherosclerotic, and anti-inflammatory effects. Catalyzes S-adenosylmethionine-dependent regioselective 3-O-methylation of flavonoids; active on various hydroxylated flavonoid substrates. Active with myricetin, quercetin, kaempferol, 4'-methyl kaempferol (kaempferide), 3'-methyl quercetin (isorhamnetin), 7-methyl quercetin (rhamnetin), 3'-methyl myricetin (laricitrin) and 3',5'-dimethyl myricetin (syringetin), thus producing 3-methyl myricetin, 3-methyl quercetin, 3-methyl kaempferol, 4',3-methyl kaempferol, 3',3-methyl quercetin, 7,3-dimethyl quercetin, 3',3-dimethyl myricetin and 3',5',3-dimethyl myricetin, respectively. Inactive with flavonol substrates methylated at the 3-hydroxyl position such as 3-O-methyl quercetin. This is Myricetin 3-O-methyltransferase 3 from Solanum habrochaites (Wild tomato).